Consider the following 352-residue polypeptide: 7,8-didemethyl-8-hydroxy-5-deazariboflavin synthase (352 aa).

The 241-residue stretch at 35–275 (ITFSKNAFIP…EGISIQVPPN (241 aa)) folds into the Radical SAM core domain. [4Fe-4S] cluster-binding residues include cysteine 49, cysteine 53, and cysteine 56.

It belongs to the radical SAM superfamily. CofG family. As to quaternary structure, consists of two subunits, CofG and CofH. The cofactor is [4Fe-4S] cluster.

The enzyme catalyses 5-amino-5-(4-hydroxybenzyl)-6-(D-ribitylimino)-5,6-dihydrouracil + S-adenosyl-L-methionine = 7,8-didemethyl-8-hydroxy-5-deazariboflavin + 5'-deoxyadenosine + L-methionine + NH4(+) + H(+). Its pathway is cofactor biosynthesis; coenzyme F0 biosynthesis. Catalyzes the radical-mediated synthesis of 7,8-didemethyl-8-hydroxy-5-deazariboflavin from 5-amino-5-(4-hydroxybenzyl)-6-(D-ribitylimino)-5,6-dihydrouracil. The polypeptide is 7,8-didemethyl-8-hydroxy-5-deazariboflavin synthase (Methanococcus maripaludis (strain C5 / ATCC BAA-1333)).